The following is a 271-amino-acid chain: 5'-AMP-activated protein kinase subunit beta-2 (271 aa).

Positions 1 to 47 are disordered; that stretch reads MGNTTSERVSGERHGAKAARAEGGGHGPGKEHKIMVGSTDDPSVFSL. S38 carries the post-translational modification Phosphoserine; by ULK1. The residue at position 39 (T39) is a Phosphothreonine; by ULK1. S68 is subject to Phosphoserine; by ULK1. A phosphoserine mark is found at S94 and S107. Position 147 is a phosphothreonine (T147). Phosphoserine is present on residues S157 and S169. S173 is subject to Phosphoserine; by ULK1. Residue S183 is modified to Phosphoserine.

Belongs to the 5'-AMP-activated protein kinase beta subunit family. In terms of assembly, AMPK is a heterotrimer of an alpha catalytic subunit (PRKAA1 or PRKAA2), a beta (PRKAB1 or PRKAB2) and a gamma non-catalytic subunits (PRKAG1, PRKAG2 or PRKAG3). Post-translationally, phosphorylated when associated with the catalytic subunit (PRKAA1 or PRKAA2). Phosphorylated by ULK1 and ULK2; leading to negatively regulate AMPK activity and suggesting the existence of a regulatory feedback loop between ULK1, ULK2 and AMPK.

Non-catalytic subunit of AMP-activated protein kinase (AMPK), an energy sensor protein kinase that plays a key role in regulating cellular energy metabolism. In response to reduction of intracellular ATP levels, AMPK activates energy-producing pathways and inhibits energy-consuming processes: inhibits protein, carbohydrate and lipid biosynthesis, as well as cell growth and proliferation. AMPK acts via direct phosphorylation of metabolic enzymes, and by longer-term effects via phosphorylation of transcription regulators. Also acts as a regulator of cellular polarity by remodeling the actin cytoskeleton; probably by indirectly activating myosin. Beta non-catalytic subunit acts as a scaffold on which the AMPK complex assembles, via its C-terminus that bridges alpha (PRKAA1 or PRKAA2) and gamma subunits (PRKAG1, PRKAG2 or PRKAG3). The chain is 5'-AMP-activated protein kinase subunit beta-2 (Prkab2) from Rattus norvegicus (Rat).